We begin with the raw amino-acid sequence, 186 residues long: ATP synthase subunit b, chloroplastic (186 aa).

The chain crosses the membrane as a helical span at residues isoleucine 26–phenylalanine 44.

This sequence belongs to the ATPase B chain family. In terms of assembly, F-type ATPases have 2 components, F(1) - the catalytic core - and F(0) - the membrane proton channel. F(1) has five subunits: alpha(3), beta(3), gamma(1), delta(1), epsilon(1). F(0) has four main subunits: a(1), b(1), b'(1) and c(10-14). The alpha and beta chains form an alternating ring which encloses part of the gamma chain. F(1) is attached to F(0) by a central stalk formed by the gamma and epsilon chains, while a peripheral stalk is formed by the delta, b and b' chains.

It localises to the plastid. Its subcellular location is the chloroplast thylakoid membrane. Its function is as follows. F(1)F(0) ATP synthase produces ATP from ADP in the presence of a proton or sodium gradient. F-type ATPases consist of two structural domains, F(1) containing the extramembraneous catalytic core and F(0) containing the membrane proton channel, linked together by a central stalk and a peripheral stalk. During catalysis, ATP synthesis in the catalytic domain of F(1) is coupled via a rotary mechanism of the central stalk subunits to proton translocation. Component of the F(0) channel, it forms part of the peripheral stalk, linking F(1) to F(0). This Chara vulgaris (Common stonewort) protein is ATP synthase subunit b, chloroplastic.